Consider the following 207-residue polypeptide: Small ribosomal subunit protein uS4c (207 aa).

The S4 RNA-binding domain maps to 92-156 (MRLDNILFRL…YQSIITKRIE (65 aa)).

The protein belongs to the universal ribosomal protein uS4 family. Part of the 30S ribosomal subunit. Contacts protein S5. The interaction surface between S4 and S5 is involved in control of translational fidelity.

It localises to the plastid. It is found in the chloroplast. Its function is as follows. One of the primary rRNA binding proteins, it binds directly to 16S rRNA where it nucleates assembly of the body of the 30S subunit. In terms of biological role, with S5 and S12 plays an important role in translational accuracy. The protein is Small ribosomal subunit protein uS4c (rps4) of Equisetum pratense (Meadow horsetail).